Reading from the N-terminus, the 138-residue chain is ATP synthase epsilon chain (138 aa).

This sequence belongs to the ATPase epsilon chain family. In terms of assembly, F-type ATPases have 2 components, CF(1) - the catalytic core - and CF(0) - the membrane proton channel. CF(1) has five subunits: alpha(3), beta(3), gamma(1), delta(1), epsilon(1). CF(0) has three main subunits: a, b and c.

The protein resides in the cell inner membrane. Its function is as follows. Produces ATP from ADP in the presence of a proton gradient across the membrane. The protein is ATP synthase epsilon chain of Polaromonas sp. (strain JS666 / ATCC BAA-500).